The primary structure comprises 729 residues: DNA topoisomerase 3 (729 aa).

The Toprim domain maps to 3–136 (KKAVLAEKPS…VKRLWISSVT (134 aa)). Residues glutamate 9 and aspartate 105 each contribute to the Mg(2+) site. The Topo IA-type catalytic domain occupies 153-590 (YETLYAAAAA…EMKEYAKAVV (438 aa)). Positions 187–192 (SCGRVQ) are interaction with DNA. Tyrosine 311 acts as the O-(5'-phospho-DNA)-tyrosine intermediate in catalysis. The disordered stretch occupies residues 680–708 (FEQRRKQNKHKNVSKREVQSYMKKQNKQD).

This sequence belongs to the type IA topoisomerase family. It depends on Mg(2+) as a cofactor.

The enzyme catalyses ATP-independent breakage of single-stranded DNA, followed by passage and rejoining.. Functionally, releases the supercoiling and torsional tension of DNA, which is introduced during the DNA replication and transcription, by transiently cleaving and rejoining one strand of the DNA duplex. Introduces a single-strand break via transesterification at a target site in duplex DNA. The scissile phosphodiester is attacked by the catalytic tyrosine of the enzyme, resulting in the formation of a DNA-(5'-phosphotyrosyl)-enzyme intermediate and the expulsion of a 3'-OH DNA strand. The free DNA strand then undergoes passage around the unbroken strand, thus removing DNA supercoils. Finally, in the religation step, the DNA 3'-OH attacks the covalent intermediate to expel the active-site tyrosine and restore the DNA phosphodiester backbone. The protein is DNA topoisomerase 3 of Shouchella clausii (strain KSM-K16) (Alkalihalobacillus clausii).